Here is an 858-residue protein sequence, read N- to C-terminus: Ubiquitin carboxyl-terminal hydrolase 5 (858 aa).

The residue at position 2 (alanine 2) is an N-acetylalanine. Residues 73-98 form a disordered region; sequence LRRTRRPKEEDTSAGTGDPPRKKPTR. Lysine 113 is covalently cross-linked (Glycyl lysine isopeptide (Lys-Gly) (interchain with G-Cter in SUMO)). Residues serine 149 and serine 156 each carry the phosphoserine modification. The segment at 175–283 adopts a UBP-type; degenerate zinc-finger fold; it reads QVSKHAFNLK…EHLSHFGIDM (109 aa). A disulfide bond links cysteine 195 and cysteine 816. Residues cysteine 199 and cysteine 202 each coordinate Zn(2+). Residue tryptophan 209 coordinates substrate. Residue cysteine 219 coordinates Zn(2+). 221–224 serves as a coordination point for substrate; it reads RRYF. Histidine 232 contacts Zn(2+). The substrate site is built by tyrosine 259, tyrosine 261, and aspartate 264. Threonine 292 is modified (phosphothreonine). The USP domain occupies 326-856; it reads TGIRNLGNSC…LGYIYFYQRV (531 aa). Cysteine 335 (nucleophile) is an active-site residue. The residue at position 623 (threonine 623) is a Phosphothreonine. UBA domains are found at residues 654-695 and 722-762; these read MLDE…VMSH and PPPE…IFSH. 3 positions are modified to phosphoserine: serine 779, serine 783, and serine 785. Histidine 818 serves as the catalytic Proton acceptor.

This sequence belongs to the peptidase C19 family. As to quaternary structure, homodimer. Interacts with TRIML1. Post-translationally, SUMOylated at Lys-113; SUMOylation affects the interaction with Cav3.2 channels. In terms of processing, ubiquitinated by SMURF1; leading to proteasomal degradation.

It localises to the cytoplasm. The protein resides in the stress granule. It is found in the nucleus. It carries out the reaction Thiol-dependent hydrolysis of ester, thioester, amide, peptide and isopeptide bonds formed by the C-terminal Gly of ubiquitin (a 76-residue protein attached to proteins as an intracellular targeting signal).. Deubiquitinating enzyme that participates in a wide range of cellular processes by specifically cleaving isopeptide bonds between ubiquitin and substrate proteins or ubiquitin itself. Affects thereby important cellular signaling pathways such as NF-kappa-B, Wnt/beta-catenin, and cytokine production by regulating ubiquitin-dependent protein degradation. Participates in the activation of the Wnt signaling pathway by promoting FOXM1 deubiquitination and stabilization that induces the recruitment of beta-catenin to Wnt target gene promoter. Regulates the assembly and disassembly of heat-induced stress granules by mediating the hydrolysis of unanchored ubiquitin chains. Promotes lipopolysaccharide-induced apoptosis and inflammatory response by stabilizing the TXNIP protein. Affects T-cell biology by stabilizing the inhibitory receptor on T-cells PDC1. Acts as a negative regulator of autophagy by regulating ULK1 at both protein and mRNA levels. Acts also as a negative regulator of type I interferon production by simultaneously removing both 'Lys-48'-linked unanchored and 'Lys-63'-linked anchored polyubiquitin chains on the transcription factor IRF3. Modulates the stability of DNA mismatch repair protein MLH1 and counteracts the effect of the ubiquitin ligase UBR4. Upon activation by insulin, it gets phosphorylated through mTORC1-mediated phosphorylation to enhance YTHDF1 stability by removing 'Lys-11'-linked polyubiquitination. May also deubiquitinate other substrates such as the calcium channel CACNA1H. This chain is Ubiquitin carboxyl-terminal hydrolase 5 (Usp5), found in Mus musculus (Mouse).